The primary structure comprises 336 residues: MAAKSRSPKRGTSEKTPLVEKEAPYQPPTKGILSKLPASWVPYAQLIRLEQPHGNYMIYFPHIIGLMYASAIRPTELSVLGHRAAIFAIWTFLMRGAGCAWNDNVDQDFDRKTERCRHRPIARGAISTTQGHVFTLILTLLGFAAIQSLPIECTYVGVGTTVLSAIYPFGKRFTHFAQVILGSTLASTIALSAYSVGLPALSKDYFVPTLCLSATIMLLVVFYDVVYARADTTDDLKSGVKGMAVRFRNHLEGLFAFITLSIAGSLTTLGYLVGMGHWFYLFSVGGLTFGLVSMVALTHWNILPGYSSGRCYAFAILNLLTGFIMEYATKDYVVGV.

The tract at residues Met1–Gln26 is disordered. Residues Gly11–Ala23 show a composition bias toward basic and acidic residues. A run of 8 helical transmembrane segments spans residues Pro52–Ile72, Pro74–Met94, Gly131–Ile151, Val179–Pro199, Phe206–Val226, Leu251–Tyr271, Leu272–Val292, and Phe314–Val334.

Belongs to the UbiA prenyltransferase family. Mg(2+) is required as a cofactor.

The protein localises to the membrane. The catalysed reaction is orsellinate + (2E,6E)-farnesyl diphosphate = ilicicolinate B + diphosphate. The protein operates within secondary metabolite biosynthesis; terpenoid biosynthesis. In terms of biological role, prenytransferase; part of the asc-1 gene cluster that mediates the biosynthesis of both ascochlorin and ascofuranone, a strong inhibitor of cyanide-insensitive alternative oxidases and a promising drug candidate against African trypanosomiasis. The first step in the pathway is performed by the non-reducing polyketide synthase ascC that produces orsellinic acid by condensing acetyl-CoA with 3 malonyl-CoA units. Orsellinic acid is then prenylated by the prenyltransferase ascA to yield ilicicolinic acid B. Ilicicolinic acid B is further reduced to ilicicolin B by the reductase ascB. The halogenase ascD then chlorinates ilicicolin B to produce ilicicolin A which is converted to ilicicolin A epoxide by the cytochrome P450 monooxygenase ascE that catalyzes stereoselective epoxidation of the terminal double bond of the prenyl group. Ilicicolin A epoxide is the last common precursor for the biosynthesis of ascofuranone and ascochlorin. The terpene cyclase ascF produces a monocyclic terpene, and the cyclization reaction is proposed to be initiated by protonation of the terminal epoxide of ilicicolin A epoxide to generate a monocyclic tertiarycation, which is followed by a series of hydride and methyl shifts with abstraction of proton, leading to the formation of the (14S,15R,19R)-trimethylcyclohexanone ring structure of ilicicolin C, which is finally reduced to ascochlorin by the dehydrogenase ascG. On the other hand, ilicicolin A epoxide is hydroxylated by the cytochrome P450 monooxygenase ascH, and the resultant product is cyclized by the terpene cyclase ascI to ascofuranol via protonation-initiated epoxide ring opening, which facilitates the 6-endo-tet cyclization to form the tetrahy-drofuran ring. Finally, ascofuranol is oxidized into ascofuranone by ascJ. The polypeptide is Prenytransferase ascA (Acremonium egyptiacum (Oospora egyptiaca)).